A 368-amino-acid chain; its full sequence is Chorismate synthase (368 aa).

Arg-46 is an NADP(+) binding site. FMN is bound by residues 124–126, Gly-284, 299–303, and Arg-326; these read RAS and KPTPS.

Belongs to the chorismate synthase family. It depends on FMNH2 as a cofactor.

The catalysed reaction is 5-O-(1-carboxyvinyl)-3-phosphoshikimate = chorismate + phosphate. Its pathway is metabolic intermediate biosynthesis; chorismate biosynthesis; chorismate from D-erythrose 4-phosphate and phosphoenolpyruvate: step 7/7. Its function is as follows. Catalyzes the anti-1,4-elimination of the C-3 phosphate and the C-6 proR hydrogen from 5-enolpyruvylshikimate-3-phosphate (EPSP) to yield chorismate, which is the branch point compound that serves as the starting substrate for the three terminal pathways of aromatic amino acid biosynthesis. This reaction introduces a second double bond into the aromatic ring system. The polypeptide is Chorismate synthase (Pyrobaculum aerophilum (strain ATCC 51768 / DSM 7523 / JCM 9630 / CIP 104966 / NBRC 100827 / IM2)).